The following is a 121-amino-acid chain: Basic phospholipase A2 daboxin P (121 aa).

Cystine bridges form between Cys26/Cys115, Cys28/Cys44, Cys43/Cys95, Cys49/Cys121, Cys50/Cys88, Cys57/Cys81, and Cys75/Cys86. Residues Tyr27, Gly29, and Gly31 each contribute to the Ca(2+) site. His47 is an active-site residue. Asp48 contacts Ca(2+). Residue Asp89 is part of the active site.

Ca(2+) is required as a cofactor. In terms of tissue distribution, expressed by the venom gland.

The protein resides in the secreted. It catalyses the reaction a 1,2-diacyl-sn-glycero-3-phosphocholine + H2O = a 1-acyl-sn-glycero-3-phosphocholine + a fatty acid + H(+). Its function is as follows. Snake venom phospholipase A2 (PLA2) that exhibits anticoagulant activity, probably by binding to factor X and its activated form factor Xa (F10). Shows no cytotoxicity. PLA2 catalyzes the calcium-dependent hydrolysis of the 2-acyl groups in 3-sn-phosphoglycerides. The protein is Basic phospholipase A2 daboxin P of Daboia russelii (Russel's viper).